Reading from the N-terminus, the 478-residue chain is Secretogranin-3 (478 aa).

A signal peptide spans M1–A21. Disordered regions lie at residues F22–D126 and I208–L287. The span at P28 to L42 shows a compositional bias: basic and acidic residues. Residues A63–I74 show a composition bias toward acidic residues. Basic and acidic residues predominate over residues A97 to S120. The segment covering D235–R259 has biased composition (acidic residues).

The protein resides in the cytoplasmic vesicle. Its subcellular location is the secretory vesicle lumen. It is found in the secretory vesicle membrane. The protein localises to the secreted. This Danio rerio (Zebrafish) protein is Secretogranin-3 (scg3).